The following is a 387-amino-acid chain: Dual specificity protein phosphatase MPK-4 (387 aa).

Residues 1–15 (MEQSQSQRQAWPSSS) show a composition bias toward polar residues. Residues 1-27 (MEQSQSQRQAWPSSSAGGGKAQDSGVL) form a disordered region. The Tyrosine-protein phosphatase domain occupies 35–182 (GPVSIDEVDT…LKLFRRMGCK (148 aa)). Cysteine 126 functions as the Phosphocysteine intermediate in the catalytic mechanism. The disordered stretch occupies residues 248 to 267 (LEHKPRDRPPQEVVPKEKEE).

The protein belongs to the protein-tyrosine phosphatase family. Non-receptor class dual specificity subfamily. In terms of assembly, interacts (via tyrosine-protein phosphatase domain) with bsk/JNK; the interaction dephosphorylates bsk.

The protein localises to the nucleus. It localises to the cytoplasm. The enzyme catalyses O-phospho-L-tyrosyl-[protein] + H2O = L-tyrosyl-[protein] + phosphate. The catalysed reaction is O-phospho-L-seryl-[protein] + H2O = L-seryl-[protein] + phosphate. It catalyses the reaction O-phospho-L-threonyl-[protein] + H2O = L-threonyl-[protein] + phosphate. Inhibited by the tyrosine phosphatase inhibitor sodium vanadate. Functionally, dual specificity phosphatase; can dephosphorylate both phosphotyrosine and phosphoserine or phosphothreonine residues. May suppress bsk/JNK activation during the immune response. This Drosophila melanogaster (Fruit fly) protein is Dual specificity protein phosphatase MPK-4.